A 335-amino-acid chain; its full sequence is E3 ubiquitin ligase rnf-121 (335 aa).

Residues 1-47 (MGQHGAIRLQNEVQEGMPPPHELTEEEQWAEEHRKMHEKHKGHEAMH) lie on the Cytoplasmic side of the membrane. The chain crosses the membrane as a helical span at residues 48 to 68 (MEMMVIFMISVIVGQIFLVTW). Residues 69–72 (KRKH) lie on the Lumenal side of the membrane. A helical membrane pass occupies residues 73–93 (FKSYQMCTLIGMLTIPVYVCF). The Cytoplasmic portion of the chain corresponds to 94–99 (NRSWYR). Residues 100–120 (FLATWLVFCIFSAFIWLKASA) form a helical membrane-spanning segment. The Lumenal segment spans residues 121–143 (QHISGGTPRFVYKWFLFLHKLSY). A helical transmembrane segment spans residues 144–164 (VLGVVGYLIMMGALLGFHVLF). Over 165-168 (GVSQ) the chain is Cytoplasmic. Residues 169-189 (PTLMDAGILFMFYGVYYGVLG) form a helical membrane-spanning segment. Over 190 to 335 (RDFAHICTAR…QGLTTWMGLE (146 aa)) the chain is Lumenal. An RING-type; atypical zinc finger spans residues 222–284 (CAVCGGRLDD…GKLQTCPYCK (63 aa)).

This sequence belongs to the RNF121 family. In terms of tissue distribution, expressed in body wall muscles, the hypodermis, seam cells, vulval cells, spermathecal cells, uterine cells and the distal tip cell (at protein level).

The protein resides in the endoplasmic reticulum membrane. It is found in the golgi apparatus membrane. It carries out the reaction S-ubiquitinyl-[E2 ubiquitin-conjugating enzyme]-L-cysteine + [acceptor protein]-L-lysine = [E2 ubiquitin-conjugating enzyme]-L-cysteine + N(6)-ubiquitinyl-[acceptor protein]-L-lysine.. It participates in protein modification; protein ubiquitination. Functionally, E3 ubiquitin ligase which accepts ubiquitin and transfers it to substrates such as the beta-integrin subunit pat-3, promoting their degradation by the endoplasmic reticulum-associated degradation (ERAD) pathway which is a pathway involved in ubiquitin-dependent degradation of misfolded endoplasmic reticulum proteins. Negatively regulates the unfolded protein response to reduce endoplasmic reticulum stress. Required for the cessation of distal tip cell migration at the end of larval morphogenesis. Plays a role in germline and gonad development. In Caenorhabditis elegans, this protein is E3 ubiquitin ligase rnf-121.